The primary structure comprises 271 residues: Acyl-[acyl-carrier-protein]--UDP-N-acetylglucosamine O-acyltransferase (271 aa).

This sequence belongs to the transferase hexapeptide repeat family. LpxA subfamily. Homotrimer.

The protein localises to the cytoplasm. The catalysed reaction is a (3R)-hydroxyacyl-[ACP] + UDP-N-acetyl-alpha-D-glucosamine = a UDP-3-O-[(3R)-3-hydroxyacyl]-N-acetyl-alpha-D-glucosamine + holo-[ACP]. Its pathway is glycolipid biosynthesis; lipid IV(A) biosynthesis; lipid IV(A) from (3R)-3-hydroxytetradecanoyl-[acyl-carrier-protein] and UDP-N-acetyl-alpha-D-glucosamine: step 1/6. Its function is as follows. Involved in the biosynthesis of lipid A, a phosphorylated glycolipid that anchors the lipopolysaccharide to the outer membrane of the cell. This is Acyl-[acyl-carrier-protein]--UDP-N-acetylglucosamine O-acyltransferase from Azorhizobium caulinodans (strain ATCC 43989 / DSM 5975 / JCM 20966 / LMG 6465 / NBRC 14845 / NCIMB 13405 / ORS 571).